Consider the following 289-residue polypeptide: ADP-dependent (S)-NAD(P)H-hydrate dehydratase (289 aa).

The region spanning 9-286 (VTAAALRAQP…PEVPGILDRL (278 aa)) is the YjeF C-terminal domain. The (6S)-NADPHX site is built by alanine 44 and histidine 160. AMP is bound by residues 197 to 201 (KGADS) and glycine 226. Aspartate 227 lines the (6S)-NADPHX pocket.

It belongs to the NnrD/CARKD family. Homotetramer. The cofactor is Mg(2+).

It catalyses the reaction (6S)-NADHX + ADP = AMP + phosphate + NADH + H(+). It carries out the reaction (6S)-NADPHX + ADP = AMP + phosphate + NADPH + H(+). Its function is as follows. Catalyzes the dehydration of the S-form of NAD(P)HX at the expense of ADP, which is converted to AMP. Together with NAD(P)HX epimerase, which catalyzes the epimerization of the S- and R-forms, the enzyme allows the repair of both epimers of NAD(P)HX, a damaged form of NAD(P)H that is a result of enzymatic or heat-dependent hydration. This is ADP-dependent (S)-NAD(P)H-hydrate dehydratase from Xanthomonas campestris pv. campestris (strain ATCC 33913 / DSM 3586 / NCPPB 528 / LMG 568 / P 25).